Here is a 715-residue protein sequence, read N- to C-terminus: Inducible lysine decarboxylase (715 aa).

Lysine 367 carries the post-translational modification N6-(pyridoxal phosphate)lysine.

Belongs to the Orn/Lys/Arg decarboxylase class-I family. In terms of assembly, homodecamer. Interacts with RavA. It depends on pyridoxal 5'-phosphate as a cofactor.

Its subcellular location is the cytoplasm. The enzyme catalyses L-lysine + H(+) = cadaverine + CO2. In Escherichia coli O157:H7, this protein is Inducible lysine decarboxylase (cadA).